We begin with the raw amino-acid sequence, 361 residues long: Allatostatin-A receptor (361 aa).

The Extracellular portion of the chain corresponds to 1–46; sequence MESTEDEFYTICLNLTAEDPSFGNCNYTTDFENGELLEKVVSRVVP. N-linked (GlcNAc...) asparagine glycosylation is found at Asn-14 and Asn-26. The chain crosses the membrane as a helical span at residues 47-67; the sequence is IFFGFIGIVGLVGNALVVLVV. Topologically, residues 68 to 78 are cytoplasmic; it reads AANPGMRSTTN. Residues 79–99 traverse the membrane as a helical segment; that stretch reads LLIINLAVADLLFVIFCVPFT. At 100 to 116 the chain is on the extracellular side; sequence ATDYVMPRWPFGDWWCK. An intrachain disulfide couples Cys-115 to Cys-196. The chain crosses the membrane as a helical span at residues 117-137; sequence VVQYFIVVTAHASVYTLVLMS. Topologically, residues 138–158 are cytoplasmic; it reads LDRFMAVVHPIASMSIRTEKN. A helical transmembrane segment spans residues 159 to 179; the sequence is ALLAIACIWVVILTTAIPVGI. Over 180–212 the chain is Extracellular; that stretch reads CHGEREYSYFNRNHSSCVFLEERGYSKLGFQMS. Residue Asn-192 is glycosylated (N-linked (GlcNAc...) asparagine). A helical membrane pass occupies residues 213–233; that stretch reads FFLSSYVIPLALISVLYMCML. The Cytoplasmic segment spans residues 234–259; sequence TRLWKSAPGGRVSAESRRGRKKVTRM. A helical transmembrane segment spans residues 260-280; sequence VVVVVVVFAVCWCPIQIILLV. Residues 281–296 are Extracellular-facing; the sequence is KALNKYHITYFTVTAQ. The helical transmembrane segment at 297-317 threads the bilayer; sequence IVSHVLAYMNSCVNPVLYAFL. Residues 318–361 are Cytoplasmic-facing; sequence SENFRVAFRKVMYCPPPYNDGFSGRPQATKTTRTGNGNSCHDIV. A disordered region spans residues 341–361; sequence GRPQATKTTRTGNGNSCHDIV. Residues 343-361 are compositionally biased toward polar residues; that stretch reads PQATKTTRTGNGNSCHDIV.

The protein belongs to the G-protein coupled receptor 1 family. In terms of tissue distribution, expressed in the midgut and, to a lesser extent, in the fore- and hindgut of fifth instar larvae. Also highly expressed in the brain of fourth and fifth instar larvae.

The protein localises to the cell membrane. Its function is as follows. Acts as a receptor for A-type allatostatin neuropeptide hormones. This Bombyx mori (Silk moth) protein is Allatostatin-A receptor.